A 701-amino-acid polypeptide reads, in one-letter code: Elongation factor G 2 (701 aa).

The region spanning 8-290 (ERYRNIGISA…AVIDYLPSPA (283 aa)) is the tr-type G domain. GTP contacts are provided by residues 17-24 (AHIDAGKT), 88-92 (DTPGH), and 142-145 (NKMD).

It belongs to the TRAFAC class translation factor GTPase superfamily. Classic translation factor GTPase family. EF-G/EF-2 subfamily.

It is found in the cytoplasm. Catalyzes the GTP-dependent ribosomal translocation step during translation elongation. During this step, the ribosome changes from the pre-translocational (PRE) to the post-translocational (POST) state as the newly formed A-site-bound peptidyl-tRNA and P-site-bound deacylated tRNA move to the P and E sites, respectively. Catalyzes the coordinated movement of the two tRNA molecules, the mRNA and conformational changes in the ribosome. The protein is Elongation factor G 2 of Cupriavidus pinatubonensis (strain JMP 134 / LMG 1197) (Cupriavidus necator (strain JMP 134)).